Reading from the N-terminus, the 490-residue chain is GTPase Der (490 aa).

2 EngA-type G domains span residues 3-166 (PVVA…MDDV) and 203-376 (IKLA…DSST). Residues 9–16 (GRPNVGKS), 56–60 (DTGGI), 118–121 (NKTD), 209–216 (GRPNVGKS), 256–260 (DTAGV), and 321–324 (NKWD) contribute to the GTP site. The KH-like domain occupies 377 to 461 (RRVSTAMLTR…PIRIQFKEGE (85 aa)).

This sequence belongs to the TRAFAC class TrmE-Era-EngA-EngB-Septin-like GTPase superfamily. EngA (Der) GTPase family. In terms of assembly, associates with the 50S ribosomal subunit.

Functionally, GTPase that plays an essential role in the late steps of ribosome biogenesis. The chain is GTPase Der from Salmonella gallinarum (strain 287/91 / NCTC 13346).